A 90-amino-acid polypeptide reads, in one-letter code: U7-theraphotoxin-Hhn1a 8 (90 aa).

The N-terminal stretch at 1 to 19 is a signal peptide; it reads MKTAIFTVVLALAVFAVLS. A propeptide spanning residues 20–50 is cleaved from the precursor; the sequence is FGWEANEKALSEEFTELIHEKGAASETEARE. Disulfide bonds link Cys-51-Cys-65, Cys-58-Cys-70, and Cys-64-Cys-81.

It belongs to the neurotoxin 10 (Hwtx-1) family. 13 (Hntx-13) subfamily. As to expression, expressed by the venom gland.

It is found in the secreted. Functionally, ion channel inhibitor. This chain is U7-theraphotoxin-Hhn1a 8, found in Cyriopagopus hainanus (Chinese bird spider).